Consider the following 121-residue polypeptide: Flagellar hook-basal body complex protein FliE (121 aa).

This sequence belongs to the FliE family.

It is found in the bacterial flagellum basal body. The chain is Flagellar hook-basal body complex protein FliE from Saccharophagus degradans (strain 2-40 / ATCC 43961 / DSM 17024).